The sequence spans 46 residues: Osteocalcin 2 (46 aa).

The 43-residue stretch at 1–43 (AVPAGTLSPLQMESLREVCEVNVACDEMADTAGIVAAYTXFYG) folds into the Gla domain. Thr6 is modified (phosphothreonine). 4 residues coordinate Ca(2+): Glu13, Glu17, Glu20, and Asp26. Glu13, Glu17, and Glu20 each carry 4-carboxyglutamate. Cys19 and Cys25 are oxidised to a cystine. At Glu27 the chain carries 4-carboxyglutamate.

Belongs to the osteocalcin/matrix Gla protein family. Gamma-carboxyglutamate residues are formed by vitamin K dependent carboxylation by GGCX. These residues are essential for the binding of calcium.

It localises to the secreted. Functionally, the carboxylated form is one of the main organic components of the bone matrix, which constitutes 1-2% of the total bone protein. The carboxylated form binds strongly to apatite and calcium. The chain is Osteocalcin 2 from Solea senegalensis (Senegalese sole).